We begin with the raw amino-acid sequence, 258 residues long: Protein STAY-GREEN LIKE, chloroplastic (258 aa).

Belongs to the staygreen family. Strongly expressed in leaves, stems and panicles, and at lower levels in roots and seeds.

Its function is as follows. Promotes chlorophyll degradation in leaves. May be involved in LHCI proteins degradation, regulating the balance between LHCI and LHCII. The polypeptide is Protein STAY-GREEN LIKE, chloroplastic (Oryza sativa subsp. japonica (Rice)).